Here is a 309-residue protein sequence, read N- to C-terminus: MAERVLANLEAKFTEGNYYDILQSYKALYNRFSTQKKYKETVTLLESGCNKFLEYKQWNCAADLAKLLIECYKNFKIQYSDESKEPIIKIFKNFKGECAGKISFMRDAIEWSSKNGGDSKGSEEFHTLLAITLSEEGDYIDAQKHFIFGNDYFSFCEMLKNWTEDVDEEEKDLYITRAIFGLLCLKKLKQASDLYNLFTTKVIKGDPSPLLNFDRFLLLTLERDALPLFNLLRQKYERSLKRDPQFKKFLDQIANIFYNVPIQSGGGLSGMLSNLLSGFGGGMGMGGNSSGGGLASMEVDGPTIEDEMD.

A disordered region spans residues 290 to 309; the sequence is SGGGLASMEVDGPTIEDEMD.

The protein belongs to the GET4 family.

In terms of biological role, may play a role in insertion of tail-anchored proteins into the endoplasmic reticulum membrane. This is Golgi to ER traffic protein 4 homolog from Dictyostelium discoideum (Social amoeba).